The following is an 87-amino-acid chain: Probable Fe(2+)-trafficking protein (87 aa).

This sequence belongs to the Fe(2+)-trafficking protein family.

Could be a mediator in iron transactions between iron acquisition and iron-requiring processes, such as synthesis and/or repair of Fe-S clusters in biosynthetic enzymes. The sequence is that of Probable Fe(2+)-trafficking protein from Francisella tularensis subsp. novicida (strain U112).